The sequence spans 133 residues: uncharacterized protein (133 aa).

This sequence to E.coli ydcQ.

This is an uncharacterized protein from Haemophilus phage HP1 (strain HP1c1) (Bacteriophage HP1).